The chain runs to 291 residues: Acetyl-coenzyme A carboxylase carboxyl transferase subunit beta (291 aa).

The interval 1–23 is disordered; the sequence is MSWLSKLMPSGIRTDNTPSKKRS. The CoA carboxyltransferase N-terminal domain maps to 28–291; sequence LWEKCSNCGS…LGRQPAPEVA (264 aa). The Zn(2+) site is built by cysteine 32, cysteine 35, cysteine 51, and cysteine 54. The segment at 32–54 adopts a C4-type zinc-finger fold; sequence CSNCGSALYRPELEENLEVCPKC.

Belongs to the AccD/PCCB family. As to quaternary structure, acetyl-CoA carboxylase is a heterohexamer composed of biotin carboxyl carrier protein (AccB), biotin carboxylase (AccC) and two subunits each of ACCase subunit alpha (AccA) and ACCase subunit beta (AccD). The cofactor is Zn(2+).

Its subcellular location is the cytoplasm. The enzyme catalyses N(6)-carboxybiotinyl-L-lysyl-[protein] + acetyl-CoA = N(6)-biotinyl-L-lysyl-[protein] + malonyl-CoA. Its pathway is lipid metabolism; malonyl-CoA biosynthesis; malonyl-CoA from acetyl-CoA: step 1/1. In terms of biological role, component of the acetyl coenzyme A carboxylase (ACC) complex. Biotin carboxylase (BC) catalyzes the carboxylation of biotin on its carrier protein (BCCP) and then the CO(2) group is transferred by the transcarboxylase to acetyl-CoA to form malonyl-CoA. The chain is Acetyl-coenzyme A carboxylase carboxyl transferase subunit beta from Stenotrophomonas maltophilia (strain R551-3).